The sequence spans 485 residues: Glutamyl-tRNA(Gln) amidotransferase subunit A (485 aa).

Residues Lys-78 and Ser-153 each act as charge relay system in the active site. The Acyl-ester intermediate role is filled by Ser-177.

The protein belongs to the amidase family. GatA subfamily. As to quaternary structure, heterotrimer of A, B and C subunits.

It carries out the reaction L-glutamyl-tRNA(Gln) + L-glutamine + ATP + H2O = L-glutaminyl-tRNA(Gln) + L-glutamate + ADP + phosphate + H(+). Allows the formation of correctly charged Gln-tRNA(Gln) through the transamidation of misacylated Glu-tRNA(Gln) in organisms which lack glutaminyl-tRNA synthetase. The reaction takes place in the presence of glutamine and ATP through an activated gamma-phospho-Glu-tRNA(Gln). The polypeptide is Glutamyl-tRNA(Gln) amidotransferase subunit A (Bacillus anthracis (strain A0248)).